The primary structure comprises 47 residues: Photosystem II reaction center protein K (47 aa).

Residues 1–10 (MAVYTLDLLA) constitute a propeptide that is removed on maturation. A helical membrane pass occupies residues 19–39 (FGPLIDILPIIPLFFLLLAFV).

The protein belongs to the PsbK family. In terms of assembly, PSII is composed of 1 copy each of membrane proteins PsbA, PsbB, PsbC, PsbD, PsbE, PsbF, PsbH, PsbI, PsbJ, PsbK, PsbL, PsbM, PsbT, PsbX, PsbY, PsbZ, Psb30/Ycf12, peripheral proteins PsbO, CyanoQ (PsbQ), PsbU, PsbV and a large number of cofactors. It forms dimeric complexes.

Its subcellular location is the cellular thylakoid membrane. One of the components of the core complex of photosystem II (PSII). PSII is a light-driven water:plastoquinone oxidoreductase that uses light energy to abstract electrons from H(2)O, generating O(2) and a proton gradient subsequently used for ATP formation. It consists of a core antenna complex that captures photons, and an electron transfer chain that converts photonic excitation into a charge separation. The polypeptide is Photosystem II reaction center protein K (Synechococcus sp. (strain CC9311)).